Consider the following 31-residue polypeptide: Cycloviolacin-O19 (31 aa).

Residues 1–31 (GTLPCGESCVWIPCISSVVGCSCKSKVCYKD) constitute a cross-link (cyclopeptide (Gly-Asp)). 3 cysteine pairs are disulfide-bonded: Cys-5-Cys-21, Cys-9-Cys-23, and Cys-14-Cys-28.

In terms of processing, this is a cyclic peptide. Expressed in petioles and runners but not in leaves, petals and roots (at protein level).

Probably participates in a plant defense mechanism. The polypeptide is Cycloviolacin-O19 (Viola odorata (Sweet violet)).